The primary structure comprises 474 residues: Photosystem II CP43 reaction center protein (474 aa).

A propeptide spanning residues 1–14 (MKTLYSLRRFYPVE) is cleaved from the precursor. Position 15 is an N-acetylthreonine (Thr15). Thr15 carries the phosphothreonine modification. Transmembrane regions (helical) follow at residues 69–93 (LFEVAHFVPEKPMYEQGLILLPHLA), 134–155 (LLGPETLEESFPFFGYVWKDRN), 178–201 (KALYFGGVYDTWAPGGGEMLRKIT), 256–276 (KPFAWARRALVWSGEAYLSYS), and 292–313 (WFNNTAYPSEFYGPTGPEASQA). Position 368 (Glu368) interacts with [CaMn4O5] cluster. The helical transmembrane segment at 448–472 (RARAAAAGFEKGIDRDFEPVLSMTP) threads the bilayer.

This sequence belongs to the PsbB/PsbC family. PsbC subfamily. PSII is composed of 1 copy each of membrane proteins PsbA, PsbB, PsbC, PsbD, PsbE, PsbF, PsbH, PsbI, PsbJ, PsbK, PsbL, PsbM, PsbT, PsbX, PsbY, PsbZ, Psb30/Ycf12, at least 3 peripheral proteins of the oxygen-evolving complex and a large number of cofactors. It forms dimeric complexes. Requires Binds multiple chlorophylls and provides some of the ligands for the Ca-4Mn-5O cluster of the oxygen-evolving complex. It may also provide a ligand for a Cl- that is required for oxygen evolution. PSII binds additional chlorophylls, carotenoids and specific lipids. as cofactor.

The protein resides in the plastid. It localises to the chloroplast thylakoid membrane. In terms of biological role, one of the components of the core complex of photosystem II (PSII). It binds chlorophyll and helps catalyze the primary light-induced photochemical processes of PSII. PSII is a light-driven water:plastoquinone oxidoreductase, using light energy to abstract electrons from H(2)O, generating O(2) and a proton gradient subsequently used for ATP formation. The chain is Photosystem II CP43 reaction center protein from Citrus sinensis (Sweet orange).